Reading from the N-terminus, the 248-residue chain is Ras-like protein family member 11B (248 aa).

Positions Ala29–Thr246 are small GTPase-like. GTP is bound by residues Gly40–Thr47, Asp87–Ile91, and Asn152–Asp155. Residues Gln205–Asp229 are disordered.

Belongs to the small GTPase superfamily. Ras family.

It catalyses the reaction GTP + H2O = GDP + phosphate + H(+). This is Ras-like protein family member 11B from Bos taurus (Bovine).